We begin with the raw amino-acid sequence, 147 residues long: Large ribosomal subunit protein uL22 (147 aa).

A disordered region spans residues 110-147 (EEKKTVAKKAPAAKKTTTTKAPAKKTTSTKKATAKKES). The span at 117 to 140 (KKAPAAKKTTTTKAPAKKTTSTKK) shows a compositional bias: low complexity.

The protein belongs to the universal ribosomal protein uL22 family. Part of the 50S ribosomal subunit.

This protein binds specifically to 23S rRNA; its binding is stimulated by other ribosomal proteins, e.g. L4, L17, and L20. It is important during the early stages of 50S assembly. It makes multiple contacts with different domains of the 23S rRNA in the assembled 50S subunit and ribosome. In terms of biological role, the globular domain of the protein is located near the polypeptide exit tunnel on the outside of the subunit, while an extended beta-hairpin is found that lines the wall of the exit tunnel in the center of the 70S ribosome. This Campylobacter jejuni subsp. jejuni serotype O:23/36 (strain 81-176) protein is Large ribosomal subunit protein uL22.